The chain runs to 1792 residues: BTB/POZ domain-containing protein 8 (1792 aa).

BTB domains are found at residues T58 to N127 and P206 to D273. Disordered stretches follow at residues D528 to G554, S581 to V658, T670 to R692, K707 to P768, S788 to V815, A831 to K989, E1151 to R1283, and S1519 to D1607. Polar residues-rich tracts occupy residues F541–D552 and G588–T601. Basic and acidic residues-rich tracts occupy residues L602 to T625 and S640 to L650. Positions G724 to T740 are enriched in polar residues. Residues D744–S758 are compositionally biased toward basic and acidic residues. Positions T838–E865 are enriched in polar residues. Low complexity predominate over residues S866–R877. 2 stretches are compositionally biased toward basic and acidic residues: residues Q878–T891 and K927–Q939. Positions I947 to R956 are enriched in polar residues. Residues M969–P987 show a composition bias toward basic and acidic residues. 2 stretches are compositionally biased toward polar residues: residues E1151 to A1160 and S1195 to M1215. Residues S1250–S1259 are compositionally biased toward low complexity. Positions I1566–N1594 are enriched in basic and acidic residues. The span at I1597 to D1607 shows a compositional bias: polar residues.

In terms of assembly, interacts (via N-terminus) with adapter protein complex AP-2 subunits alpha (AP2A1) and beta (AP2B1). As to expression, highly expressed in fetal brain. Weakly expressed in adult brain and prostate.

Its subcellular location is the cell projection. The protein localises to the axon. It is found in the presynapse. It localises to the cytoplasmic vesicle. The protein resides in the clathrin-coated vesicle. Its subcellular location is the nucleus. Involved in clathrin-mediated endocytosis at the synapse. Plays a role in neuronal development and in synaptic vesicle recycling in mature neurons, a process required for normal synaptic transmission. This is BTB/POZ domain-containing protein 8 from Homo sapiens (Human).